Reading from the N-terminus, the 266-residue chain is 2-C-methyl-D-erythritol 4-phosphate cytidylyltransferase (266 aa).

Residues 234–251 (ADDARSAEARSAEARSEE) show a composition bias toward basic and acidic residues. The segment at 234-266 (ADDARSAEARSAEARSEEPQFAGARSTDARSGG) is disordered.

Belongs to the IspD/TarI cytidylyltransferase family. IspD subfamily.

The enzyme catalyses 2-C-methyl-D-erythritol 4-phosphate + CTP + H(+) = 4-CDP-2-C-methyl-D-erythritol + diphosphate. Its pathway is isoprenoid biosynthesis; isopentenyl diphosphate biosynthesis via DXP pathway; isopentenyl diphosphate from 1-deoxy-D-xylulose 5-phosphate: step 2/6. Its function is as follows. Catalyzes the formation of 4-diphosphocytidyl-2-C-methyl-D-erythritol from CTP and 2-C-methyl-D-erythritol 4-phosphate (MEP). The sequence is that of 2-C-methyl-D-erythritol 4-phosphate cytidylyltransferase from Frankia casuarinae (strain DSM 45818 / CECT 9043 / HFP020203 / CcI3).